Consider the following 179-residue polypeptide: Large ribosomal subunit protein uL5 (179 aa).

It belongs to the universal ribosomal protein uL5 family. Part of the 50S ribosomal subunit; part of the 5S rRNA/L5/L18/L25 subcomplex. Contacts the 5S rRNA and the P site tRNA. Forms a bridge to the 30S subunit in the 70S ribosome.

Its function is as follows. This is one of the proteins that bind and probably mediate the attachment of the 5S RNA into the large ribosomal subunit, where it forms part of the central protuberance. In the 70S ribosome it contacts protein S13 of the 30S subunit (bridge B1b), connecting the 2 subunits; this bridge is implicated in subunit movement. Contacts the P site tRNA; the 5S rRNA and some of its associated proteins might help stabilize positioning of ribosome-bound tRNAs. This Shewanella pealeana (strain ATCC 700345 / ANG-SQ1) protein is Large ribosomal subunit protein uL5.